The sequence spans 428 residues: Putative FBD-associated F-box protein At5g56390 (428 aa).

Residues 2–50 (DKISQLHDELLLGILSLLPNAKDVVATMVLSKRWRYLWMMVPSLVYDDS) enclose the F-box domain. Residues 344 to 394 (CWNETSLVPEYLLPSLETFEWVDYEGTKTEKQVVAFILRIASCLKQATIVS) form the FBD domain.

This Arabidopsis thaliana (Mouse-ear cress) protein is Putative FBD-associated F-box protein At5g56390.